A 291-amino-acid chain; its full sequence is 2-dehydro-3-deoxyphosphooctonate aldolase 2 (291 aa).

N-acetylalanine is present on Ala2.

This sequence belongs to the KdsA family. As to expression, expressed in roots, apical meristem, emerging leaves, hydathodes of young leaves, styles of mature flowers and funicules of mature siliques.

Its subcellular location is the cytoplasm. The catalysed reaction is D-arabinose 5-phosphate + phosphoenolpyruvate + H2O = 3-deoxy-alpha-D-manno-2-octulosonate-8-phosphate + phosphate. In terms of biological role, catalyzes the stereospecific condensation of D-arabinose 5-phosphate and phosphoenolpyruvate to form 3-deoxy-D-manno-octulosonate 8-phosphate (KDO-8-phosphate) and inorganic phosphate. Involved in the biosynthesis of 3-deoxy-D-manno-octulosonate (KDO) which is an indispensable component of rhamnogalacturonan II (RG-II), a structurally complex pectic polysaccharide of the primary cell wall. RG-II is essential for the cell wall integrity of rapidly growing tissues and pollen tube growth and elongation. The chain is 2-dehydro-3-deoxyphosphooctonate aldolase 2 (KDSA2) from Arabidopsis thaliana (Mouse-ear cress).